Reading from the N-terminus, the 178-residue chain is Lipid A deacylase PagL (178 aa).

The signal sequence occupies residues 1–19 (MQFLKKNKPLFGIVTLALA). Catalysis depends on charge relay system residues His154, Ser156, and Asp168.

Belongs to the PagL family. As to quaternary structure, homodimer.

The protein localises to the cell outer membrane. The catalysed reaction is a 3-(acyloxy)acyl derivative of bacterial toxin + H2O = a 3-hydroxyacyl derivative of bacterial toxin + a fatty acid + H(+). Has lipid A 3-O-deacylase activity. Hydrolyzes the ester bond at the 3 position of lipid A, a bioactive component of lipopolysaccharide (LPS), thereby releasing the primary fatty acyl moiety. This is Lipid A deacylase PagL from Bordetella bronchiseptica (strain ATCC BAA-588 / NCTC 13252 / RB50) (Alcaligenes bronchisepticus).